Here is a 130-residue protein sequence, read N- to C-terminus: Phosphoribosyl-AMP cyclohydrolase (130 aa).

Aspartate 77 contacts Mg(2+). Cysteine 78 contributes to the Zn(2+) binding site. Residues aspartate 79 and aspartate 81 each contribute to the Mg(2+) site. Zn(2+) is bound by residues cysteine 95 and cysteine 102.

It belongs to the PRA-CH family. As to quaternary structure, homodimer. Mg(2+) serves as cofactor. Zn(2+) is required as a cofactor.

It is found in the cytoplasm. It catalyses the reaction 1-(5-phospho-beta-D-ribosyl)-5'-AMP + H2O = 1-(5-phospho-beta-D-ribosyl)-5-[(5-phospho-beta-D-ribosylamino)methylideneamino]imidazole-4-carboxamide. Its pathway is amino-acid biosynthesis; L-histidine biosynthesis; L-histidine from 5-phospho-alpha-D-ribose 1-diphosphate: step 3/9. In terms of biological role, catalyzes the hydrolysis of the adenine ring of phosphoribosyl-AMP. This is Phosphoribosyl-AMP cyclohydrolase from Pseudomonas syringae pv. tomato (strain ATCC BAA-871 / DC3000).